A 441-amino-acid polypeptide reads, in one-letter code: NADH-quinone oxidoreductase subunit D 1 (441 aa).

It belongs to the complex I 49 kDa subunit family. As to quaternary structure, NDH-1 is composed of 14 different subunits. Subunits NuoB, C, D, E, F, and G constitute the peripheral sector of the complex.

Its subcellular location is the cell membrane. The enzyme catalyses a quinone + NADH + 5 H(+)(in) = a quinol + NAD(+) + 4 H(+)(out). NDH-1 shuttles electrons from NADH, via FMN and iron-sulfur (Fe-S) centers, to quinones in the respiratory chain. The immediate electron acceptor for the enzyme in this species is believed to be a menaquinone. Couples the redox reaction to proton translocation (for every two electrons transferred, four hydrogen ions are translocated across the cytoplasmic membrane), and thus conserves the redox energy in a proton gradient. This is NADH-quinone oxidoreductase subunit D 1 from Salinispora tropica (strain ATCC BAA-916 / DSM 44818 / JCM 13857 / NBRC 105044 / CNB-440).